The chain runs to 709 residues: Polyribonucleotide nucleotidyltransferase (709 aa).

Residues aspartate 485 and aspartate 491 each coordinate Mg(2+). The KH domain maps to 552–611; that stretch reads PRIYTMKIDPKKIKDVIGKGGATIRSLTEETGTSIDIDDDGTVKIAAVDSNAAKNVMGRI. Residues 621 to 689 form the S1 motif domain; that stretch reads GAIYKGKVTR…RQGRIRLTMK (69 aa).

This sequence belongs to the polyribonucleotide nucleotidyltransferase family. Component of the RNA degradosome, which is a multiprotein complex involved in RNA processing and mRNA degradation. Requires Mg(2+) as cofactor.

It is found in the cytoplasm. It catalyses the reaction RNA(n+1) + phosphate = RNA(n) + a ribonucleoside 5'-diphosphate. Involved in mRNA degradation. Catalyzes the phosphorolysis of single-stranded polyribonucleotides processively in the 3'- to 5'-direction. In Haemophilus influenzae (strain 86-028NP), this protein is Polyribonucleotide nucleotidyltransferase.